We begin with the raw amino-acid sequence, 392 residues long: Chaperone protein DnaJ 1 (392 aa).

The region spanning 4 to 67 (DYYEILGVSH…QKRAVFDRGG (64 aa)) is the J domain. The CR-type zinc-finger motif lies at 134 to 216 (GVTKSLEVDT…CSGEGRVRTT (83 aa)). Residues C147, C150, C164, C167, C190, C193, C204, and C207 each contribute to the Zn(2+) site. CXXCXGXG motif repeat units lie at residues 147–154 (CPKCQGKG), 164–171 (CDTCQGRG), 190–197 (CPTCHGYG), and 204–211 (CQECSGEG). Residues 367-392 (ETNASASVEKSGGRGMFSRIKEAFGG) form a disordered region.

Belongs to the DnaJ family. As to quaternary structure, homodimer. Requires Zn(2+) as cofactor.

Its subcellular location is the cytoplasm. Functionally, participates actively in the response to hyperosmotic and heat shock by preventing the aggregation of stress-denatured proteins and by disaggregating proteins, also in an autonomous, DnaK-independent fashion. Unfolded proteins bind initially to DnaJ; upon interaction with the DnaJ-bound protein, DnaK hydrolyzes its bound ATP, resulting in the formation of a stable complex. GrpE releases ADP from DnaK; ATP binding to DnaK triggers the release of the substrate protein, thus completing the reaction cycle. Several rounds of ATP-dependent interactions between DnaJ, DnaK and GrpE are required for fully efficient folding. Also involved, together with DnaK and GrpE, in the DNA replication of plasmids through activation of initiation proteins. The polypeptide is Chaperone protein DnaJ 1 (Cutibacterium acnes (strain DSM 16379 / KPA171202) (Propionibacterium acnes)).